Here is a 57-residue protein sequence, read N- to C-terminus: Major exported protein (57 aa).

This sequence belongs to the hcp1 family. As to quaternary structure, homodimer.

It is found in the secreted. This is Major exported protein from Pseudomonas syringae pv. ribicola.